The chain runs to 89 residues: Small ribosomal subunit protein uS14 (89 aa).

The protein belongs to the universal ribosomal protein uS14 family. As to quaternary structure, part of the 30S ribosomal subunit. Contacts proteins S3 and S10.

Its function is as follows. Binds 16S rRNA, required for the assembly of 30S particles and may also be responsible for determining the conformation of the 16S rRNA at the A site. In Pelodictyon phaeoclathratiforme (strain DSM 5477 / BU-1), this protein is Small ribosomal subunit protein uS14.